A 397-amino-acid chain; its full sequence is CCA-adding enzyme (397 aa).

The ATP site is built by Gly27 and Arg30. CTP is bound by residues Gly27 and Arg30. The Mg(2+) site is built by Asp40 and Asp42. The ATP site is built by Arg111, Asp154, Arg157, Arg160, and Arg163. Arg111, Asp154, Arg157, Arg160, and Arg163 together coordinate CTP.

The protein belongs to the tRNA nucleotidyltransferase/poly(A) polymerase family. Bacterial CCA-adding enzyme type 3 subfamily. In terms of assembly, homodimer. Mg(2+) is required as a cofactor.

It catalyses the reaction a tRNA precursor + 2 CTP + ATP = a tRNA with a 3' CCA end + 3 diphosphate. The catalysed reaction is a tRNA with a 3' CCA end + 2 CTP + ATP = a tRNA with a 3' CCACCA end + 3 diphosphate. Catalyzes the addition and repair of the essential 3'-terminal CCA sequence in tRNAs without using a nucleic acid template. Adds these three nucleotides in the order of C, C, and A to the tRNA nucleotide-73, using CTP and ATP as substrates and producing inorganic pyrophosphate. tRNA 3'-terminal CCA addition is required both for tRNA processing and repair. Also involved in tRNA surveillance by mediating tandem CCA addition to generate a CCACCA at the 3' terminus of unstable tRNAs. While stable tRNAs receive only 3'-terminal CCA, unstable tRNAs are marked with CCACCA and rapidly degraded. This chain is CCA-adding enzyme, found in Anoxybacillus flavithermus (strain DSM 21510 / WK1).